A 346-amino-acid polypeptide reads, in one-letter code: Protein RecA (346 aa).

65-72 (GPESSGKT) is a binding site for ATP.

The protein belongs to the RecA family.

It localises to the cytoplasm. Can catalyze the hydrolysis of ATP in the presence of single-stranded DNA, the ATP-dependent uptake of single-stranded DNA by duplex DNA, and the ATP-dependent hybridization of homologous single-stranded DNAs. It interacts with LexA causing its activation and leading to its autocatalytic cleavage. This is Protein RecA from Pseudomonas aeruginosa (strain UCBPP-PA14).